The chain runs to 885 residues: Phycobiliprotein ApcE (885 aa).

Residue C185 participates in (2R,3E)-phycocyanobilin binding. 3 PBS-linker domains span residues 242 to 422 (DVQG…FRKV), 498 to 680 (KSIG…NSKK), and 694 to 871 (NSIQ…KQSS).

It belongs to the phycobilisome linker protein family. Contains one covalently linked bilin chromophore. This protein autochromophorylates (Potential).

Its subcellular location is the plastid. It localises to the chloroplast thylakoid membrane. Its function is as follows. This protein is postulated to act both as terminal energy acceptor and as a linker polypeptide that stabilizes the phycobilisome architecture. May have intrinsic bilin lyase activity. In Aglaothamnion neglectum (Red alga), this protein is Phycobiliprotein ApcE (apcE).